Consider the following 53-residue polypeptide: Sec-independent protein translocase protein TatA (53 aa).

Residues 1–21 (MGMSVSHLLIVLLIIFVLFGA) traverse the membrane as a helical segment.

This sequence belongs to the TatA/E family. In terms of assembly, the Tat system comprises two distinct complexes: a TatABC complex, containing multiple copies of TatA, TatB and TatC subunits, and a separate TatA complex, containing only TatA subunits. Substrates initially bind to the TatABC complex, which probably triggers association of the separate TatA complex to form the active translocon.

It is found in the cell inner membrane. Part of the twin-arginine translocation (Tat) system that transports large folded proteins containing a characteristic twin-arginine motif in their signal peptide across membranes. TatA could form the protein-conducting channel of the Tat system. This is Sec-independent protein translocase protein TatA from Rickettsia massiliae (strain Mtu5).